The sequence spans 96 residues: UPF0235 protein NT01EI_0281 (96 aa).

It belongs to the UPF0235 family.

In Edwardsiella ictaluri (strain 93-146), this protein is UPF0235 protein NT01EI_0281.